Here is a 274-residue protein sequence, read N- to C-terminus: Purine nucleoside phosphorylase YlmD (274 aa).

An inosine-binding site is contributed by 46–47 (LH). Residues His-80, Cys-125, His-142, Cys-182, Cys-183, Cys-242, and Cys-245 each contribute to the Zn(2+) site. Inosine is bound at residue Arg-262.

It belongs to the purine nucleoside phosphorylase YfiH/LACC1 family. It depends on Zn(2+) as a cofactor.

The catalysed reaction is adenosine + phosphate = alpha-D-ribose 1-phosphate + adenine. It carries out the reaction S-methyl-5'-thioadenosine + phosphate = 5-(methylsulfanyl)-alpha-D-ribose 1-phosphate + adenine. The enzyme catalyses inosine + phosphate = alpha-D-ribose 1-phosphate + hypoxanthine. It catalyses the reaction adenosine + H2O + H(+) = inosine + NH4(+). Purine nucleoside enzyme that catalyzes the phosphorolysis of adenosine and inosine nucleosides, yielding D-ribose 1-phosphate and the respective free bases, adenine and hypoxanthine. Also catalyzes the phosphorolysis of S-methyl-5'-thioadenosine into adenine and S-methyl-5-thio-alpha-D-ribose 1-phosphate. Also has adenosine deaminase activity. The protein is Purine nucleoside phosphorylase YlmD of Geobacillus stearothermophilus (strain DSM 13240 / CIP 106956 / 10).